The sequence spans 323 residues: Delta-aminolevulinic acid dehydratase (323 aa).

Zn(2+) is bound by residues C118, C120, and C128. K193 (schiff-base intermediate with substrate) is an active-site residue. The 5-aminolevulinate site is built by R203 and R215. E231 is a binding site for Mg(2+). K246 functions as the Schiff-base intermediate with substrate in the catalytic mechanism. Residues S272 and Y311 each contribute to the 5-aminolevulinate site.

This sequence belongs to the ALAD family. In terms of assembly, homooctamer. Zn(2+) serves as cofactor.

It carries out the reaction 2 5-aminolevulinate = porphobilinogen + 2 H2O + H(+). The protein operates within porphyrin-containing compound metabolism; protoporphyrin-IX biosynthesis; coproporphyrinogen-III from 5-aminolevulinate: step 1/4. Catalyzes an early step in the biosynthesis of tetrapyrroles. Binds two molecules of 5-aminolevulinate per subunit, each at a distinct site, and catalyzes their condensation to form porphobilinogen. This is Delta-aminolevulinic acid dehydratase (hemB) from Helicobacter pylori (strain J99 / ATCC 700824) (Campylobacter pylori J99).